Reading from the N-terminus, the 378-residue chain is Erythronate-4-phosphate dehydrogenase (378 aa).

Substrate is bound by residues Ser-45 and Thr-66. Residues Asp-146 and Thr-175 each contribute to the NAD(+) site. The active site involves Arg-208. Asp-232 contributes to the NAD(+) binding site. Glu-237 is a catalytic residue. The active-site Proton donor is the His-254. NAD(+) is bound at residue Gly-257. Substrate is bound at residue Tyr-258.

It belongs to the D-isomer specific 2-hydroxyacid dehydrogenase family. PdxB subfamily. As to quaternary structure, homodimer.

Its subcellular location is the cytoplasm. It carries out the reaction 4-phospho-D-erythronate + NAD(+) = (R)-3-hydroxy-2-oxo-4-phosphooxybutanoate + NADH + H(+). It functions in the pathway cofactor biosynthesis; pyridoxine 5'-phosphate biosynthesis; pyridoxine 5'-phosphate from D-erythrose 4-phosphate: step 2/5. Its function is as follows. Catalyzes the oxidation of erythronate-4-phosphate to 3-hydroxy-2-oxo-4-phosphonooxybutanoate. This chain is Erythronate-4-phosphate dehydrogenase, found in Escherichia coli O157:H7.